The following is a 468-amino-acid chain: Na(+)/H(+) antiporter NhaA (468 aa).

10 helical membrane passes run 32-52, 83-103, 119-139, 148-168, 178-198, 205-225, 320-340, 354-374, 397-417, and 428-448; these read FLHI…IALL, LHFW…GMEI, ALPM…YLAI, GWAV…ALLG, FLLA…AVAF, GGFL…WIGV, ALHP…NAGV, GAMF…IVSV, LVGL…TLAF, and LGVL…GFIY.

Belongs to the NhaA Na(+)/H(+) (TC 2.A.33) antiporter family.

The protein localises to the cell inner membrane. It catalyses the reaction Na(+)(in) + 2 H(+)(out) = Na(+)(out) + 2 H(+)(in). In terms of biological role, na(+)/H(+) antiporter that extrudes sodium in exchange for external protons. This chain is Na(+)/H(+) antiporter NhaA, found in Cupriavidus necator (strain ATCC 17699 / DSM 428 / KCTC 22496 / NCIMB 10442 / H16 / Stanier 337) (Ralstonia eutropha).